A 751-amino-acid polypeptide reads, in one-letter code: MFGSPKRAALAAASLLAIFGNGPSVMAQETSSNNAVVADGKTFALNGENVSYRFRVNETTGDLVSDHFGGSITGDLFPGFGAEALGGWVGLAGRFRREFPDHGRGDFRIPAVRIRQEAGYTVTDLQYQSYSVIPGKPALPGLPSTFGSEEDVTTLVVHLYDNYSSIAVDLSYSIFPKYDAIVRSANVTNKGTQNITVEALSSFSFDFPYEDLEMISLRGDWAREAHRQRRKVEYGLQGFGSSTGFSSHLHNPFLAIVHPSTTESQGEAWGFNLVYTGSFSVDVEKGSQGLTRALLGFNPSQLSWQLGAGETLTSPECVSVYSSDGIGGMSRSFHRLYRNHLIKSKFATSDRPPLLNSWEGLYFDYNESTIYRLAEESAALGVKLFVMDDGWFGDKYPRVSDNAGLGDWVPNPDRFPDGLTPLVEDVTKLKAGNSSTDLRFGLWVEPEMANPNSTLYHEHPDWVLHAGQYPRTLQRNQLVLNLALPEVQDYIIDEITNILNSSAISYVKWDFNRAMHETPSPSNDHEYILGMYRVFDTLTTRFPDVLWEGCASGGGRFDPGVLEYFPQIWTSDNTDALMRITIQLGTSLAYPPSAMGAHLSAVPNAQTGRTIPVKFRGHVAMMGGSFGLELDPAELQEDEKAEVPGLIALAEKVNPIILTGDMWRLRLPEESNWPAVLFISEDGNQAVLFYFQLGPNVNHATPWLRLQGLDPKATYSVDGNGSYSGATLMNMGLQYKFESDYDSKVVFLQKQ.

The N-terminal stretch at Met-1–Ala-27 is a signal peptide. N-linked (GlcNAc...) asparagine glycosylation is found at Asn-49, Asn-57, Asn-162, Asn-186, Asn-194, Asn-366, Asn-433, Asn-452, and Asn-500. The Nucleophile role is filled by Asp-510. The active-site Proton donor is Asp-572. Asn-720 is a glycosylation site (N-linked (GlcNAc...) asparagine).

The protein belongs to the glycosyl hydrolase 36 family. In terms of assembly, homotetramer. The cofactor is Mg(2+). Requires NAD(+) as cofactor.

It localises to the secreted. It carries out the reaction Hydrolysis of terminal, non-reducing alpha-D-galactose residues in alpha-D-galactosides, including galactose oligosaccharides, galactomannans and galactolipids.. Functionally, hydrolyzes a variety of simple alpha-D-galactoside as well as more complex molecules such as oligosaccharides and polysaccharides. This chain is Probable alpha-galactosidase C (aglC), found in Aspergillus flavus (strain ATCC 200026 / FGSC A1120 / IAM 13836 / NRRL 3357 / JCM 12722 / SRRC 167).